Reading from the N-terminus, the 305-residue chain is Phosphoribosylaminoimidazole-succinocarboxamide synthase (305 aa).

This sequence belongs to the SAICAR synthetase family.

It carries out the reaction 5-amino-1-(5-phospho-D-ribosyl)imidazole-4-carboxylate + L-aspartate + ATP = (2S)-2-[5-amino-1-(5-phospho-beta-D-ribosyl)imidazole-4-carboxamido]succinate + ADP + phosphate + 2 H(+). It participates in purine metabolism; IMP biosynthesis via de novo pathway; 5-amino-1-(5-phospho-D-ribosyl)imidazole-4-carboxamide from 5-amino-1-(5-phospho-D-ribosyl)imidazole-4-carboxylate: step 1/2. This Albidiferax ferrireducens (strain ATCC BAA-621 / DSM 15236 / T118) (Rhodoferax ferrireducens) protein is Phosphoribosylaminoimidazole-succinocarboxamide synthase.